The following is a 212-amino-acid chain: Thymidylate kinase (212 aa).

10-17 (GIDGCGKT) contacts ATP.

It belongs to the thymidylate kinase family.

The catalysed reaction is dTMP + ATP = dTDP + ADP. In terms of biological role, phosphorylation of dTMP to form dTDP in both de novo and salvage pathways of dTTP synthesis. The protein is Thymidylate kinase of Prochlorococcus marinus (strain AS9601).